The following is a 469-amino-acid chain: Glutamate--tRNA ligase (469 aa).

The short motif at 9–19 (PSPTGFLHVGG) is the 'HIGH' region element. Zn(2+) contacts are provided by Cys98, Cys100, Cys125, and Asp127. The short motif at 236–240 (KLSKR) is the 'KMSKS' region element. Lys239 provides a ligand contact to ATP.

Belongs to the class-I aminoacyl-tRNA synthetase family. Glutamate--tRNA ligase type 1 subfamily. Monomer. Requires Zn(2+) as cofactor.

Its subcellular location is the cytoplasm. The enzyme catalyses tRNA(Glu) + L-glutamate + ATP = L-glutamyl-tRNA(Glu) + AMP + diphosphate. Catalyzes the attachment of glutamate to tRNA(Glu) in a two-step reaction: glutamate is first activated by ATP to form Glu-AMP and then transferred to the acceptor end of tRNA(Glu). The polypeptide is Glutamate--tRNA ligase (Shewanella baltica (strain OS185)).